The chain runs to 883 residues: Integrator complex subunit 6 (883 aa).

The region spanning 3-227 (ILLFLIDTSA…QCLESLVQKV (225 aa)) is the VWFA domain. Residues 625–632 (MMIDEADE) carry the Inhibitory loop motif. Residues 666–686 (RRQSPAVNSHIGGKGPPAPMT) form a disordered region. The residue at position 800 (Ser800) is a Phosphoserine.

This sequence belongs to the Integrator subunit 6 family. Component of the Integrator complex, composed of core subunits INTS1, INTS2, INTS3, INTS4, INTS5, INTS6, INTS7, INTS8, INTS9/RC74, INTS10, INTS11/CPSF3L, INTS12, INTS13, INTS14 and INTS15. The core complex associates with protein phosphatase 2A subunits PPP2CA and PPP2R1A, to form the Integrator-PP2A (INTAC) complex.

Its subcellular location is the nucleus. It localises to the chromosome. Functionally, component of the integrator complex, a multiprotein complex that terminates RNA polymerase II (Pol II) transcription in the promoter-proximal region of genes. The integrator complex provides a quality checkpoint during transcription elongation by driving premature transcription termination of transcripts that are unfavorably configured for transcriptional elongation: the complex terminates transcription by (1) catalyzing dephosphorylation of the C-terminal domain (CTD) of Pol II subunit POLR2A/RPB1 and SUPT5H/SPT5, (2) degrading the exiting nascent RNA transcript via endonuclease activity and (3) promoting the release of Pol II from bound DNA. The integrator complex is also involved in terminating the synthesis of non-coding Pol II transcripts, such as enhancer RNAs (eRNAs), small nuclear RNAs (snRNAs), telomerase RNAs and long non-coding RNAs (lncRNAs). Within the integrator complex, INTS6 acts as a molecular adapter that promotes assembly of protein phosphatase 2A (PP2A) subunits to the integrator core complex, promoting recruitment of PP2A to transcription pause-release checkpoint. Mediates recruitment of cytoplasmic dynein to the nuclear envelope, probably as component of the integrator complex. This Mus musculus (Mouse) protein is Integrator complex subunit 6 (Ints6).